The sequence spans 685 residues: Pentatricopeptide repeat-containing protein At5g19020, mitochondrial (685 aa).

The transit peptide at 1–23 directs the protein to the mitochondrion; it reads MIKLIRFFRSRRCWVISLQARCF. PPR repeat units lie at residues 40 to 74, 75 to 105, 106 to 136, 137 to 171, 172 to 206, 207 to 237, 238 to 268, 269 to 303, 304 to 338, 339 to 369, 370 to 400, 401 to 435, 437 to 471, 472 to 502, 506 to 540, 541 to 576, and 577 to 607; these read TERALVSALGSCASSNDVTCGRQIHCRVLKSGLDS, NGYICNSVLNMYAKCRLLADAESVFRDHAKL, DSASFNIMVDGYVRSRRLWDALKLFDVMPER, SCVSYTTLIKGYAQNNQWSEAMELFREMRNLGIML, NEVTLATVISACSHLGGIWDCRMLQSLAIKLKLEG, RVFVSTNLLHMYCLCLCLKDARKLFDEMPER, NLVTWNVMLNGYSKAGLIEQAEELFDQITEK, DIVSWGTMIDGCLRKNQLDEALVYYTEMLRCGMKP, SEVMMVDLLSASARSVGSSKGLQLHGTIVKRGFDC, YDFLQATIIHFYAVSNDIKLALQQFEASVKD, HIASRNALIAGFVKNGMVEQAREVFDQTHDK, DIFSWNAMISGYAQSLSPQLALHLFREMISSSQVK, DAITMVSVFSAISSLGSLEEGKRAHDYLNFSTIPP, NDNLTAAIIDMYAKCGSIETALNIFHQTKNI, TISPWNAIICGSATHGHAKLALDLYSDLQSLPIKP, NSITFVGVLSACCHAGLVELGKTYFESMKSDHGIEP, and DIKHYGCMVDLLGKAGRLEEAKEMIKKMPVK. The segment at 612 to 685 is type E motif; degenerate; that stretch reads IWGMLLSASR…EWSRAFSGVV (74 aa).

It belongs to the PPR family. PCMP-E subfamily.

Its subcellular location is the mitochondrion. The chain is Pentatricopeptide repeat-containing protein At5g19020, mitochondrial (PCMP-E42) from Arabidopsis thaliana (Mouse-ear cress).